We begin with the raw amino-acid sequence, 586 residues long: Glutamine--tRNA ligase (586 aa).

Residues 58-68 carry the 'HIGH' region motif; the sequence is PEPNGYLHIGH. Residues 59–61 and 65–71 contribute to the ATP site; these read EPN and HIGHAKS. L-glutamine contacts are provided by D91 and Y240. ATP contacts are provided by residues T259 and 294 to 295; that span reads RL. Positions 301–305 match the 'KMSKS' region motif; the sequence is VTSKR.

It belongs to the class-I aminoacyl-tRNA synthetase family. As to quaternary structure, monomer.

It localises to the cytoplasm. It carries out the reaction tRNA(Gln) + L-glutamine + ATP = L-glutaminyl-tRNA(Gln) + AMP + diphosphate. The sequence is that of Glutamine--tRNA ligase from Bordetella avium (strain 197N).